Consider the following 334-residue polypeptide: Small ribosomal subunit protein RACK1z (334 aa).

7 WD repeats span residues 16–47 (GHND…LVWD), 73–103 (GHSH…RLWD), 115–145 (GHDK…KLWN), 163–195 (GHNG…KVWN), 207–237 (GHGG…LLWD), 248–277 (DAGS…KIWD), and 296–326 (NQML…RIYK).

This sequence belongs to the WD repeat G protein beta family. Ribosomal protein RACK1 subfamily. In terms of assembly, interacts with RAC1, RAC3, RAC6, RAR1, SGT1 and RBOHB. Homodimer and heterodimer with RACK1B. Widely expressed.

It localises to the cytoplasm. It is found in the cell membrane. Its function is as follows. Component of the RACK1 regulatory proteins that functions in innate immunity by interacting with multiple proteins in the RAC1 immune complex. Acts as a positive regulator of reactive oxygen species (ROS) production and is required for resistance against rice blast (M.grisea) infection. The sequence is that of Small ribosomal subunit protein RACK1z (RACK1A) from Oryza sativa subsp. japonica (Rice).